The sequence spans 479 residues: Bifunctional protein HldE (479 aa).

The segment at 1–322 (MIDDFRFGRI…RELLQEMPET (322 aa)) is ribokinase. 198 to 201 (NRIE) is an ATP binding site. Asp267 is a catalytic residue. Residues 347–479 (FTNGCFDLVH…LVRGMQSAPS (133 aa)) are cytidylyltransferase.

The protein in the N-terminal section; belongs to the carbohydrate kinase PfkB family. In the C-terminal section; belongs to the cytidylyltransferase family. As to quaternary structure, homodimer.

The catalysed reaction is D-glycero-beta-D-manno-heptose 7-phosphate + ATP = D-glycero-beta-D-manno-heptose 1,7-bisphosphate + ADP + H(+). The enzyme catalyses D-glycero-beta-D-manno-heptose 1-phosphate + ATP + H(+) = ADP-D-glycero-beta-D-manno-heptose + diphosphate. Its pathway is nucleotide-sugar biosynthesis; ADP-L-glycero-beta-D-manno-heptose biosynthesis; ADP-L-glycero-beta-D-manno-heptose from D-glycero-beta-D-manno-heptose 7-phosphate: step 1/4. The protein operates within nucleotide-sugar biosynthesis; ADP-L-glycero-beta-D-manno-heptose biosynthesis; ADP-L-glycero-beta-D-manno-heptose from D-glycero-beta-D-manno-heptose 7-phosphate: step 3/4. In terms of biological role, catalyzes the phosphorylation of D-glycero-D-manno-heptose 7-phosphate at the C-1 position to selectively form D-glycero-beta-D-manno-heptose-1,7-bisphosphate. Its function is as follows. Catalyzes the ADP transfer from ATP to D-glycero-beta-D-manno-heptose 1-phosphate, yielding ADP-D-glycero-beta-D-manno-heptose. This chain is Bifunctional protein HldE, found in Gluconobacter oxydans (strain 621H) (Gluconobacter suboxydans).